Reading from the N-terminus, the 486-residue chain is Ribosomal RNA small subunit methyltransferase F (486 aa).

S-adenosyl-L-methionine contacts are provided by residues 122-128 (ASAPGSK), Glu146, Asp173, and Asp191. Cys244 (nucleophile) is an active-site residue.

Belongs to the class I-like SAM-binding methyltransferase superfamily. RsmB/NOP family.

The protein resides in the cytoplasm. It carries out the reaction cytidine(1407) in 16S rRNA + S-adenosyl-L-methionine = 5-methylcytidine(1407) in 16S rRNA + S-adenosyl-L-homocysteine + H(+). Its function is as follows. Specifically methylates the cytosine at position 1407 (m5C1407) of 16S rRNA. The protein is Ribosomal RNA small subunit methyltransferase F of Shewanella loihica (strain ATCC BAA-1088 / PV-4).